The primary structure comprises 159 residues: Phosphopantetheine adenylyltransferase (159 aa).

Substrate is bound at residue threonine 10. Residues 10–11 (TF) and histidine 18 contribute to the ATP site. Substrate-binding residues include lysine 42, methionine 74, and arginine 88. ATP contacts are provided by residues 89-91 (GLR), glutamate 99, and 124-130 (WSFISSS).

It belongs to the bacterial CoaD family. In terms of assembly, homohexamer. It depends on Mg(2+) as a cofactor.

The protein resides in the cytoplasm. The catalysed reaction is (R)-4'-phosphopantetheine + ATP + H(+) = 3'-dephospho-CoA + diphosphate. It participates in cofactor biosynthesis; coenzyme A biosynthesis; CoA from (R)-pantothenate: step 4/5. Functionally, reversibly transfers an adenylyl group from ATP to 4'-phosphopantetheine, yielding dephospho-CoA (dPCoA) and pyrophosphate. The sequence is that of Phosphopantetheine adenylyltransferase from Shigella sonnei (strain Ss046).